A 335-amino-acid chain; its full sequence is GTPase Obg (335 aa).

The region spanning 1–158 is the Obg domain; the sequence is MFVDQITLEL…RLVELELKLI (158 aa). Positions 159–334 constitute an OBG-type G domain; sequence ADIGLVGFPN…LHDLFKSKLS (176 aa). GTP-binding positions include 165–172, 190–194, 215–218, 285–288, and 315–317; these read GFPNAGKS, FTTLH, DIPG, NKID, and SGL. Serine 172 and threonine 192 together coordinate Mg(2+).

This sequence belongs to the TRAFAC class OBG-HflX-like GTPase superfamily. OBG GTPase family. Monomer. Mg(2+) is required as a cofactor.

It is found in the cytoplasm. Functionally, an essential GTPase which binds GTP, GDP and possibly (p)ppGpp with moderate affinity, with high nucleotide exchange rates and a fairly low GTP hydrolysis rate. Plays a role in control of the cell cycle, stress response, ribosome biogenesis and in those bacteria that undergo differentiation, in morphogenesis control. The protein is GTPase Obg of Chlamydia muridarum (strain MoPn / Nigg).